We begin with the raw amino-acid sequence, 539 residues long: Cytochrome P450 monooxygenase tenB (539 aa).

The chain crosses the membrane as a helical span at residues 13-33 (LGYYEKVAGVLGFLSIALLFW). The disordered stretch occupies residues 439–460 (PFRFSRASKDDDDDGKSTSSHA). A heme-binding site is contributed by Cys481.

The protein belongs to the cytochrome P450 family. Requires heme as cofactor.

Its subcellular location is the membrane. Its pathway is secondary metabolite biosynthesis. Cytochrome P450 monooxygenase; part of the gene cluster that mediates the biosynthesis of tenellin-type 2-pyridones, iron-chelating compounds involved in iron stress tolerance, competition with the natural competitor fungus Metarhizium robertsii and insect hosts infection. TenB catalyzes the selective N-hydroxylation of the 2-pyridone nitrogen of yield tellinin and 15-hydroxytellenin (15-HT), respectively. The pathway begins with the assembly of the polyketide-amino acid backbone by the hybrid PKS-NRPS tenS with the help of the enoyl reductase tenC. These enzymes catalyze the synthesis of the pyrrolidine-2-dione intermediates pretellinin A, 11-hydropretellenin A, 12-hydropretellenin A, 13-hydropretellenin A, 14-hydropretellenin A, 12-oxopretellenin A and prototellinin D. The cytochrome P450 monooxygenase tenA then catalyzes an oxidative ring expansion of pretenellin A and 14-hydropretellenin A to form the 2-pyridone core, leading to pretenellin B and pyridovericin, respectively. The cytochrome P450 monooxygenase tenB is then required for the selective N-hydroxylation of the 2-pyridone nitrogen of yield tellinin and 15-hydroxytellenin (15-HT), respectively. The UDP-glucosyltransferase GT1 and the methyltransferase MT1, located outside the tenS gene cluster, contribute to the stepwise glycosylation and methylation of 15-HT to obtain the glycoside pyridovericin-N-O-(4-O-methyl-beta-D-glucopyranoside) (PMGP). Additional related compounds such as 1-O-methyl-15-HT, (8Z)-1-O-methyl-15-HT, and O-methyltenellin A are also produced but the enzymes involved in their biosynthesis have still to be determined. This chain is Cytochrome P450 monooxygenase tenB, found in Beauveria bassiana (White muscardine disease fungus).